Reading from the N-terminus, the 690-residue chain is Wilms tumor protein 1-interacting protein homolog (690 aa).

2 disordered regions span residues 151-316 (MSAT…VSPR) and 328-372 (TLGS…PRSS). The span at 152 to 186 (SATSPRSSMASSASSSQEHSKYSSPRSSISSNALS) shows a compositional bias: low complexity. 4 stretches are compositionally biased toward polar residues: residues 204-214 (EKYTSPRSSLG), 223-233 (PRSSYASTTSD), 240-261 (PRAS…TSGI), and 272-292 (PRSS…SYSD). The span at 335-357 (SVVSPRSSISSHSSRSSRSSRGS) shows a compositional bias: low complexity. LIM zinc-binding domains are found at residues 479–540 (GICI…SGFQ), 544–603 (DKCF…TVFA), and 604–673 (PKCA…RLSV).

This sequence belongs to the zyxin/ajuba family. As to quaternary structure, interacts with prickle3.

Its subcellular location is the cell junction. The protein resides in the adherens junction. The protein localises to the nucleus. Functionally, may monitor slit diaphragm protein assembly, a specialized adherens junction characteristic of podocytes. In case of podocyte injury, it shuttles into the nucleus and acts as a transcription regulator. Plays a role in the regulation of cell morphology and cytoskeletal organization. Acts as a transcriptional corepressor for snai1 and snai2/slug and plays a role in regulating neural crest development. Involved in the organization of the basal body. Involved in cilia growth and positioning. The chain is Wilms tumor protein 1-interacting protein homolog (wtip) from Xenopus laevis (African clawed frog).